A 654-amino-acid chain; its full sequence is tRNA 5-methylaminomethyl-2-thiouridine biosynthesis bifunctional protein MnmC (654 aa).

Residues 1–235 (MSDFQHAQLD…KREMLGGTYQ (235 aa)) form a tRNA (mnm(5)s(2)U34)-methyltransferase region. Residues 261-654 (VGGGLAGCAS…LRDLVRGQRG (394 aa)) form an FAD-dependent cmnm(5)s(2)U34 oxidoreductase region.

The protein in the N-terminal section; belongs to the methyltransferase superfamily. tRNA (mnm(5)s(2)U34)-methyltransferase family. This sequence in the C-terminal section; belongs to the DAO family. FAD is required as a cofactor.

The protein localises to the cytoplasm. The catalysed reaction is 5-aminomethyl-2-thiouridine(34) in tRNA + S-adenosyl-L-methionine = 5-methylaminomethyl-2-thiouridine(34) in tRNA + S-adenosyl-L-homocysteine + H(+). Its function is as follows. Catalyzes the last two steps in the biosynthesis of 5-methylaminomethyl-2-thiouridine (mnm(5)s(2)U) at the wobble position (U34) in tRNA. Catalyzes the FAD-dependent demodification of cmnm(5)s(2)U34 to nm(5)s(2)U34, followed by the transfer of a methyl group from S-adenosyl-L-methionine to nm(5)s(2)U34, to form mnm(5)s(2)U34. This chain is tRNA 5-methylaminomethyl-2-thiouridine biosynthesis bifunctional protein MnmC, found in Pseudomonas aeruginosa (strain UCBPP-PA14).